The primary structure comprises 267 residues: L-aspartate dehydrogenase 2 (267 aa).

Alanine 123 and asparagine 189 together coordinate NAD(+). Residue histidine 219 is part of the active site.

Belongs to the L-aspartate dehydrogenase family.

It catalyses the reaction L-aspartate + NADP(+) + H2O = oxaloacetate + NH4(+) + NADPH + H(+). The catalysed reaction is L-aspartate + NAD(+) + H2O = oxaloacetate + NH4(+) + NADH + H(+). Its pathway is cofactor biosynthesis; NAD(+) biosynthesis; iminoaspartate from L-aspartate (dehydrogenase route): step 1/1. Specifically catalyzes the NAD or NADP-dependent dehydrogenation of L-aspartate to iminoaspartate. This Bordetella pertussis (strain Tohama I / ATCC BAA-589 / NCTC 13251) protein is L-aspartate dehydrogenase 2.